The following is a 56-amino-acid chain: Large ribosomal subunit protein eL40 (56 aa).

It belongs to the eukaryotic ribosomal protein eL40 family.

In Sulfurisphaera tokodaii (strain DSM 16993 / JCM 10545 / NBRC 100140 / 7) (Sulfolobus tokodaii), this protein is Large ribosomal subunit protein eL40.